We begin with the raw amino-acid sequence, 406 residues long: S-adenosylmethionine synthase (406 aa).

140 to 145 (GRGSVD) lines the ATP pocket.

Belongs to the AdoMet synthase 2 family. Requires Mg(2+) as cofactor.

The catalysed reaction is L-methionine + ATP + H2O = S-adenosyl-L-methionine + phosphate + diphosphate. It functions in the pathway amino-acid biosynthesis; S-adenosyl-L-methionine biosynthesis; S-adenosyl-L-methionine from L-methionine: step 1/1. In terms of biological role, catalyzes the formation of S-adenosylmethionine from methionine and ATP. The polypeptide is S-adenosylmethionine synthase (mat) (Aeropyrum pernix (strain ATCC 700893 / DSM 11879 / JCM 9820 / NBRC 100138 / K1)).